The sequence spans 94 residues: Large ribosomal subunit protein bL25 (94 aa).

This sequence belongs to the bacterial ribosomal protein bL25 family. Part of the 50S ribosomal subunit; part of the 5S rRNA/L5/L18/L25 subcomplex. Contacts the 5S rRNA. Binds to the 5S rRNA independently of L5 and L18.

This is one of the proteins that binds to the 5S RNA in the ribosome where it forms part of the central protuberance. The sequence is that of Large ribosomal subunit protein bL25 from Cronobacter sakazakii (strain ATCC BAA-894) (Enterobacter sakazakii).